The sequence spans 334 residues: Ketol-acid reductoisomerase (NADP(+)) (334 aa).

A KARI N-terminal Rossmann domain is found at 1-181 (MTTVYYDQDV…GATRAGVIET (181 aa)). NADP(+) contacts are provided by residues 25–28 (YGSQ), arginine 48, serine 52, and 82–85 (DEIQ). The active site involves histidine 107. An NADP(+)-binding site is contributed by glycine 133. The KARI C-terminal knotted domain maps to 182–327 (TFKEETETDL…RELREMMPFI (146 aa)). Positions 190, 194, 226, and 230 each coordinate Mg(2+). Serine 251 lines the substrate pocket.

The protein belongs to the ketol-acid reductoisomerase family. Mg(2+) is required as a cofactor.

The enzyme catalyses (2R)-2,3-dihydroxy-3-methylbutanoate + NADP(+) = (2S)-2-acetolactate + NADPH + H(+). It catalyses the reaction (2R,3R)-2,3-dihydroxy-3-methylpentanoate + NADP(+) = (S)-2-ethyl-2-hydroxy-3-oxobutanoate + NADPH + H(+). Its pathway is amino-acid biosynthesis; L-isoleucine biosynthesis; L-isoleucine from 2-oxobutanoate: step 2/4. It participates in amino-acid biosynthesis; L-valine biosynthesis; L-valine from pyruvate: step 2/4. Its function is as follows. Involved in the biosynthesis of branched-chain amino acids (BCAA). Catalyzes an alkyl-migration followed by a ketol-acid reduction of (S)-2-acetolactate (S2AL) to yield (R)-2,3-dihydroxy-isovalerate. In the isomerase reaction, S2AL is rearranged via a Mg-dependent methyl migration to produce 3-hydroxy-3-methyl-2-ketobutyrate (HMKB). In the reductase reaction, this 2-ketoacid undergoes a metal-dependent reduction by NADPH to yield (R)-2,3-dihydroxy-isovalerate. The chain is Ketol-acid reductoisomerase (NADP(+)) from Staphylococcus aureus (strain MSSA476).